The sequence spans 311 residues: tRNA-cytidine(32) 2-sulfurtransferase (311 aa).

The PP-loop motif motif lies at 47 to 52 (SGGKDS). Residues C122, C125, and C213 each contribute to the [4Fe-4S] cluster site.

The protein belongs to the TtcA family. Homodimer. The cofactor is Mg(2+). It depends on [4Fe-4S] cluster as a cofactor.

The protein resides in the cytoplasm. It catalyses the reaction cytidine(32) in tRNA + S-sulfanyl-L-cysteinyl-[cysteine desulfurase] + AH2 + ATP = 2-thiocytidine(32) in tRNA + L-cysteinyl-[cysteine desulfurase] + A + AMP + diphosphate + H(+). It functions in the pathway tRNA modification. Its function is as follows. Catalyzes the ATP-dependent 2-thiolation of cytidine in position 32 of tRNA, to form 2-thiocytidine (s(2)C32). The sulfur atoms are provided by the cysteine/cysteine desulfurase (IscS) system. This Citrobacter koseri (strain ATCC BAA-895 / CDC 4225-83 / SGSC4696) protein is tRNA-cytidine(32) 2-sulfurtransferase.